We begin with the raw amino-acid sequence, 1223 residues long: ATP-dependent DNA helicase P143 (1223 aa).

The short motif at 692–701 (RKCRCVQKIK) is the Nuclear localization signal element. 919–926 (GVPLSGKS) contributes to the ATP binding site. The segment at residues 967 to 981 (TINELKKCSESFFKK) is a DNA-binding region (H-T-H motif).

It localises to the host nucleus. The enzyme catalyses ATP + H2O = ADP + phosphate + H(+). Functionally, essential for the initiation of viral DNA replication, it may contribute to other functions such as controlling the switch to the late phase and leading to the inhibition of host protein synthesis. Required for late and very late gene expression. In Orgyia pseudotsugata multicapsid polyhedrosis virus (OpMNPV), this protein is ATP-dependent DNA helicase P143 (P143).